The primary structure comprises 314 residues: NADH-ubiquinone oxidoreductase chain 1 (314 aa).

The next 8 helical transmembrane spans lie at 5–25 (IMPLIGSLLLVICVMVGVAFL), 78–98 (FSPVFSLFLSLLIWMCIPYLI), 105–125 (LGVLFFLCCTSLGVYTVMIAG), 152–172 (ALILLSFIFLVGNYNFLSFYF), 176–196 (YVWFIFFCFPLGLVWLASCLA), 227–247 (LIFLAEYSSILFMSMLFVVIF), 251–271 (DIYSFMFFLKLSFISFIFIWV), and 294–314 (LSLNYLFFFVGLKIFFISLLF).

This sequence belongs to the complex I subunit 1 family.

The protein localises to the mitochondrion inner membrane. The enzyme catalyses a ubiquinone + NADH + 5 H(+)(in) = a ubiquinol + NAD(+) + 4 H(+)(out). Core subunit of the mitochondrial membrane respiratory chain NADH dehydrogenase (Complex I) that is believed to belong to the minimal assembly required for catalysis. Complex I functions in the transfer of electrons from NADH to the respiratory chain. The immediate electron acceptor for the enzyme is believed to be ubiquinone. This Anopheles gambiae (African malaria mosquito) protein is NADH-ubiquinone oxidoreductase chain 1 (mt:ND1).